Reading from the N-terminus, the 260-residue chain is FAS1 domain-containing protein SELMODRAFT_448915 (260 aa).

Over 1-35 (MRRTGRSYKPLLSQLKDHHIPVHPSSRAERAMESR) the chain is Cytoplasmic. Residues 36-58 (TLLVLLFVGVVTIVSSGLERAAA) form a helical membrane-spanning segment. The 140-residue stretch at 59 to 198 (QDDTDDGILP…IACHGIDRVL (140 aa)) folds into the FAS1 domain. The Extracellular segment spans residues 59–260 (QDDTDDGILP…SSASRYPVSE (202 aa)). N-linked (GlcNAc...) asparagine glycosylation is found at asparagine 118, asparagine 169, asparagine 176, asparagine 201, asparagine 236, and asparagine 247. A disordered region spans residues 210–260 (PEASPPFGAEQASPAPEALPPGTRSPNNTANPSNRKSNSTRSSASRYPVSE). Residues 233 to 254 (RSPNNTANPSNRKSNSTRSSAS) are compositionally biased toward polar residues.

The protein resides in the membrane. The protein is FAS1 domain-containing protein SELMODRAFT_448915 of Selaginella moellendorffii (Spikemoss).